The following is a 174-amino-acid chain: Probable carboxylesterase Culp5 (174 aa).

S67 functions as the Nucleophile in the catalytic mechanism. Residues C137 and C144 are joined by a disulfide bond. Residue D141 is part of the active site. Catalysis depends on H153, which acts as the Proton donor/acceptor.

Belongs to the cutinase family.

Its function is as follows. Does not exhibit cutinase activity. The protein is Probable carboxylesterase Culp5 of Mycobacterium tuberculosis (strain ATCC 25618 / H37Rv).